Consider the following 160-residue polypeptide: Phosphopantetheine adenylyltransferase (160 aa).

Belongs to the eukaryotic CoaD family.

Its subcellular location is the cytoplasm. It catalyses the reaction (R)-4'-phosphopantetheine + ATP + H(+) = 3'-dephospho-CoA + diphosphate. Its pathway is cofactor biosynthesis; coenzyme A biosynthesis. Reversibly transfers an adenylyl group from ATP to 4'-phosphopantetheine, yielding dephospho-CoA (dPCoA) and pyrophosphate. In Pyrococcus furiosus (strain ATCC 43587 / DSM 3638 / JCM 8422 / Vc1), this protein is Phosphopantetheine adenylyltransferase.